Reading from the N-terminus, the 402-residue chain is Imidazolonepropionase (402 aa).

Residues His69 and His71 each coordinate Fe(3+). Positions 69 and 71 each coordinate Zn(2+). 3 residues coordinate 4-imidazolone-5-propanoate: Arg78, Tyr141, and His174. An N-formimidoyl-L-glutamate-binding site is contributed by Tyr141. His239 lines the Fe(3+) pocket. Residue His239 coordinates Zn(2+). Gln242 contributes to the 4-imidazolone-5-propanoate binding site. Asp314 contacts Fe(3+). Asp314 serves as a coordination point for Zn(2+). The N-formimidoyl-L-glutamate site is built by Asn316 and Gly318. Thr319 contributes to the 4-imidazolone-5-propanoate binding site.

The protein belongs to the metallo-dependent hydrolases superfamily. HutI family. Requires Zn(2+) as cofactor. The cofactor is Fe(3+).

It localises to the cytoplasm. It carries out the reaction 4-imidazolone-5-propanoate + H2O = N-formimidoyl-L-glutamate. It functions in the pathway amino-acid degradation; L-histidine degradation into L-glutamate; N-formimidoyl-L-glutamate from L-histidine: step 3/3. In terms of biological role, catalyzes the hydrolytic cleavage of the carbon-nitrogen bond in imidazolone-5-propanoate to yield N-formimidoyl-L-glutamate. It is the third step in the universal histidine degradation pathway. The chain is Imidazolonepropionase from Maricaulis maris (strain MCS10) (Caulobacter maris).